The chain runs to 187 residues: Large ribosomal subunit protein bL12cx (187 aa).

The N-terminal 54 residues, 1 to 54 (MASTTLSIATTIRSSSPLTSASTHHFLSKPTAIEFPFRLSSSSSHRAINLRPIS), are a transit peptide targeting the chloroplast.

The protein belongs to the bacterial ribosomal protein bL12 family.

It localises to the plastid. The protein localises to the chloroplast. This is Large ribosomal subunit protein bL12cx (RPL12C) from Arabidopsis thaliana (Mouse-ear cress).